A 697-amino-acid chain; its full sequence is Long-chain-fatty-acid--CoA ligase 6 (697 aa).

The chain crosses the membrane as a helical; Signal-anchor for type III membrane protein span at residues 25–45; that stretch reads LSATTLVSVGALAAVLAYWLT. Topologically, residues 46-697 are cytoplasmic; that stretch reads HRPKALQPPC…QIEELYLVSV (652 aa).

This sequence belongs to the ATP-dependent AMP-binding enzyme family. The cofactor is Mg(2+).

It is found in the mitochondrion outer membrane. The protein resides in the peroxisome membrane. Its subcellular location is the microsome membrane. It localises to the endoplasmic reticulum membrane. It carries out the reaction a long-chain fatty acid + ATP + CoA = a long-chain fatty acyl-CoA + AMP + diphosphate. The catalysed reaction is (5Z,8Z,11Z,14Z)-eicosatetraenoate + ATP + CoA = (5Z,8Z,11Z,14Z)-eicosatetraenoyl-CoA + AMP + diphosphate. The enzyme catalyses 15-hydroxy-(5Z,8Z,11Z,13E)-eicosatetraenoate + ATP + CoA = 15-hydroxy-(5Z,8Z,11Z,13E)-eicosatetraenoyl-CoA + AMP + diphosphate. It catalyses the reaction 12-hydroxy-(5Z,8Z,10E,14Z)-eicosatetraenoate + ATP + CoA = 12-hydroxy-(5Z,8Z,10E,14Z)-eicosatetraenoyl-CoA + AMP + diphosphate. It carries out the reaction 5-hydroxy-(6E,8Z,11Z,14Z)-eicosatetraenoate + ATP + CoA = 5-hydroxy-(6E,8Z,11Z,14Z)-eicosatetraenoyl-CoA + AMP + diphosphate. The catalysed reaction is hexadecanoate + ATP + CoA = hexadecanoyl-CoA + AMP + diphosphate. The enzyme catalyses (E)-hexadec-2-enoate + ATP + CoA = (2E)-hexadecenoyl-CoA + AMP + diphosphate. Its function is as follows. Catalyzes the conversion of long-chain fatty acids to their active form acyl-CoA for both synthesis of cellular lipids, and degradation via beta-oxidation. Plays an important role in fatty acid metabolism in brain and the acyl-CoAs produced may be utilized exclusively for the synthesis of the brain lipid. This is Long-chain-fatty-acid--CoA ligase 6 (Acsl6) from Mus musculus (Mouse).